The primary structure comprises 310 residues: MFKFQKEQEIANIAGIKVGGQPGELPTVLAGTIFYNRHEIVEDAAKGLFDRDAAEKLVNLQESGSDTTGNPHMVHIFGTTAESITRYIDFIAEVSDSPFLIDSPEGPVRAHAAGYVSEIGLADRAVYNSINMSINTSEMKALEQSDIDSSIILGFNAKDSSLQGRMEMLETGAGLLEEGLLSIADRCGIVNKLIDPSITPMGNGAGIALRMTIAAKAKWGHPTGSGIHNAPSAWNWLNRQKEKDPVLYKICDIGSTCLQQAAAGDFILYGPIEYAEYVFPMAAMSDIMIAEAVADLDIEPVERHPINFLV.

It belongs to the MtrH family. As to quaternary structure, may be part of a complex composed of 3 subunits; MtxA, MtxH and MtxX.

The sequence is that of Putative methyltransferase mtx subunit H (mtxH) from Methanosarcina mazei (strain ATCC BAA-159 / DSM 3647 / Goe1 / Go1 / JCM 11833 / OCM 88) (Methanosarcina frisia).